A 130-amino-acid chain; its full sequence is Small ribosomal subunit protein uS9 (130 aa).

This sequence belongs to the universal ribosomal protein uS9 family.

In Shewanella piezotolerans (strain WP3 / JCM 13877), this protein is Small ribosomal subunit protein uS9.